A 204-amino-acid chain; its full sequence is Gellan lyase (204 aa).

As to quaternary structure, multimer.

It localises to the secreted. It carries out the reaction Eliminative cleavage of beta-D-glucopyranosyl-(1-&gt;4)-beta-D-glucopyranosyluronate bonds of gellan backbone releasing tetrasaccharides containing a 4-deoxy-4,5-unsaturated D-glucopyranosyluronic acid at the non-reducing end. The tetrasaccharide produced from deacetylated gellan is beta-D-4-deoxy-Delta(4)-GlcAp-(1-&gt;4)-beta-D-Glcp-(1-&gt;4)-alpha-L-Rhap-(1-&gt;3)-beta-D-Glcp.. With respect to regulation, activity is stimulated by zinc, potassium, lithium, cobalt, sodium, calcium, iron, manganase, magnesium and mercury ions at a concentration of 1 mM, but inhibited by copper ions at a concentration of 1 mM. Activity is inhibited by potassium, sodium and magnesium ions at a concentration of 1 M. Activity is inhibited by urea, EDTA, dithiothreitol, p-CMB, PSF, natrium lauryl sulfate and N-bromosuccinimide. Functionally, cleaves the glycosidic bonds of gellan backbone and releases tetrasaccharide units of glucuronyl-glucosyl-rhamnosyl-glucose with unsaturated glucuronic acid at the non-reducing terminal. The enzyme is highly specific to the heteropolysaccharide gellan. The polypeptide is Gellan lyase (Geobacillus stearothermophilus (Bacillus stearothermophilus)).